Here is a 144-residue protein sequence, read N- to C-terminus: MLPQDDMTDEMKSLASRLEDTTQAFYDLALIVYNLEDTTPSDAIPESLDTLIRDLKSLPDISRKVNNLIPQDVLEYIEQGRNPDVYARQFSELVQKDNQYVNGKLYAIEGFQKAFAEEIKQAYPEVSSVVDKILNEGKVESTVS.

The protein belongs to the Mediator complex subunit 10 family. As to quaternary structure, component of the Mediator complex.

The protein localises to the cytoplasm. It localises to the nucleus. It is found in the nucleus envelope. Its function is as follows. Component of the Mediator complex, a coactivator involved in the regulated transcription of nearly all RNA polymerase II-dependent genes. Mediator functions as a bridge to convey information from gene-specific regulatory proteins to the basal RNA polymerase II transcription machinery. Mediator is recruited to promoters by direct interactions with regulatory proteins and serves as a scaffold for the assembly of a functional preinitiation complex with RNA polymerase II and the general transcription factors. This Schizosaccharomyces pombe (strain 972 / ATCC 24843) (Fission yeast) protein is Mediator of RNA polymerase II transcription subunit 10 (med10).